The following is a 342-amino-acid chain: N-acetyl-gamma-glutamyl-phosphate reductase (342 aa).

The active site involves cysteine 149.

This sequence belongs to the NAGSA dehydrogenase family. Type 1 subfamily.

Its subcellular location is the cytoplasm. The enzyme catalyses N-acetyl-L-glutamate 5-semialdehyde + phosphate + NADP(+) = N-acetyl-L-glutamyl 5-phosphate + NADPH + H(+). It participates in amino-acid biosynthesis; L-arginine biosynthesis; N(2)-acetyl-L-ornithine from L-glutamate: step 3/4. In terms of biological role, catalyzes the NADPH-dependent reduction of N-acetyl-5-glutamyl phosphate to yield N-acetyl-L-glutamate 5-semialdehyde. This chain is N-acetyl-gamma-glutamyl-phosphate reductase, found in Cereibacter sphaeroides (strain ATCC 17029 / ATH 2.4.9) (Rhodobacter sphaeroides).